The chain runs to 194 residues: Fibroblast growth factor 7 (194 aa).

The signal sequence occupies residues 1 to 31 (MRKWILTWILPSLLYRSCFHIICLVGTISLA). The N-linked (GlcNAc...) asparagine glycan is linked to asparagine 45.

The protein belongs to the heparin-binding growth factors family. Interacts with FGFBP1. Interacts with FGFR2. Affinity between fibroblast growth factors (FGFs) and their receptors is increased by heparan sulfate glycosaminoglycans that function as coreceptors.

Functionally, plays an important role in the regulation of embryonic development, cell proliferation and cell differentiation. Required for normal branching morphogenesis. Growth factor active on keratinocytes. Possible major paracrine effector of normal epithelial cell proliferation. This chain is Fibroblast growth factor 7 (FGF7), found in Ovis aries (Sheep).